Reading from the N-terminus, the 687-residue chain is Calcium-binding protein SP84 (687 aa).

Residues 1-19 (MMRAIYLLVVVCWAAAANA) form the signal peptide. EF-hand domains are found at residues 152–187 (LESD…HKNK), 257–292 (LTEI…TDDV), 406–441 (KTEA…PHMV), 476–511 (IENA…NNDA), and 579–614 (MTER…VKDL). The Ca(2+) site is built by D592, N594, D596, E598, and D603.

Expressed in salivary glands where expression is strongest in type III cells in the posterior lobe of the principal glands (at protein level). Not expressed in midgut, Malpighian tubules or epidermis.

It is found in the secreted. Functionally, binds calcium. During feeding of the phloem sap, protein is injected into sieve tubes of rice plants. This process may suppress the sieve-element clogging and facilitate continuous ingestion from sieve tubes. The sequence is that of Calcium-binding protein SP84 from Nephotettix cincticeps (Green rice leafhopper).